Here is a 546-residue protein sequence, read N- to C-terminus: SusD-like protein BACOVA_02651 (546 aa).

A signal peptide spans 1–21 (MRIFMKSKLLVIATTALLFAA). Residue cysteine 22 is the site of N-palmitoyl cysteine attachment. Cysteine 22 carries S-diacylglycerol cysteine lipidation.

Belongs to the SusD family.

It is found in the cell outer membrane. Its pathway is glucan metabolism; xyloglucan degradation. Polysaccharide-binding protein present at the surface of the cell. Probably mediates xyloglucan-binding before xyloglucan transport in the periplasm for degradation. In Bacteroides ovatus (strain ATCC 8483 / DSM 1896 / JCM 5824 / BCRC 10623 / CCUG 4943 / NCTC 11153), this protein is SusD-like protein BACOVA_02651.